The sequence spans 242 residues: Immunity protein TsiV2 (242 aa).

A run of 3 helical transmembrane segments spans residues 39 to 59 (VFGA…FADI), 66 to 86 (FWGF…LFMP), and 118 to 138 (FAWV…PLAF).

Its subcellular location is the host membrane. Its function is as follows. Immunity protein that plays a role in preventing early activation of toxin VasX. The polypeptide is Immunity protein TsiV2 (Vibrio cholerae serotype O1 (strain ATCC 39315 / El Tor Inaba N16961)).